A 3630-amino-acid chain; its full sequence is Trimeric autotransporter adhesin AtaA (3630 aa).

The signal sequence occupies residues 1-23 (MNKIYKVIWNATLLAWVAVSELA). The tract at residues 24 to 3487 (KGKTKSTTSK…TNQAVVNYLG (3464 aa)) is surface exposed passenger domain. The N-terminal YadA-like head stretch occupies residues 108-315 (SIAIGENAQG…ASDAVTVAQL (208 aa)). Positions 316–2904 (DKAYDDTNGR…GRAATEEQLK (2589 aa)) are N-terminal stalk. Positions 2905-3169 (AVITSNITEV…DSDAVNVAQL (265 aa)) are C-terminal YadA-like head. A C-terminal stalk region spans residues 3170–3561 (KAVGNQVVTT…DVEKKANAGI (392 aa)). The outer membrane translocation of the passenger domain stretch occupies residues 3539–3574 (LDNAFRITNNRIDDVEKKANAGIAAAMALESAPYVP). Beta stranded transmembrane passes span 3575-3585 (GKYTYAAGAAY), 3589-3599 (ENAVGVTLRKT), 3608-3614 (TGGVAAA), and 3618-3629 (DASVRIGISGVI). Residues 3575-3630 (GKYTYAAGAAYHGGENAVGVTLRKTADNGRWSITGGVAAASQGDASVRIGISGVID) form a translocator domain region.

Belongs to the autotransporter-2 (AT-2) (TC 1.B.40) family. Homotrimer. Interacts with TpgA.

The protein resides in the cell surface. It is found in the cell outer membrane. Its function is as follows. Responsible for autoagglutination, and for adhesion to abiotic and biotic surfaces such as polystyrene (PS), type I collagen, polypropylene (PP), polyvinylchloride (PVC), glass and stainless steel (SS). Adhesion is much stronger than that mediated by Yersinia YadA in a comparative assay. Confers autoagglutination and binding to PS, type I collagen, PP, PVC, glass and SS upon expression in Acinetobacter baylyi strain ADP1. Involved in rapid, irreversible adherence to polyurethane. Forms an unusual biofilm. An extended, surface exposed fiber binds to quartz crystals, PS and glass. It can be removed by washing in distilled water. The chain is Trimeric autotransporter adhesin AtaA from Acinetobacter sp. (strain Tol 5).